The primary structure comprises 469 residues: Lactonohydrolase oryH (469 aa).

Residues 1 to 20 (MYLSLRLVSLALCIAPLASA) form the signal peptide.

The protein belongs to the SMP-30/CGR1 family.

It participates in secondary metabolite biosynthesis. Its function is as follows. Lactonohydrolase; part of the gene cluster that mediates the biosynthesis of oryzines, natural products with an unusual maleidride backbone. The two subunits of the fungal fatty acid synthase oryfasA and oryfasB probably form octenoic acid. This fatty acid is most likely activated by the acyl-CoA ligase oryP to give octenyl-CoA before the citrate synthase-like protein oryE catalyzes condensation with oxaloacetate to form tricarboxylic acid. The next steps of the pathways are conjectural, but a favorite possible route has been proposed, beginning with decarboxylation and concomitant dehydration by the decarboxylase oryM, followed by tautomerization, which may lead to the production of a diene intermediate. Reduction of this diene intermediate could give the known metabolite piliformic acid. On the pathway to oryzine B and oryzine A, however, hydroxylation of the diene by the alpha-ketoglutarate-dependent dioxygenase oryG and lactonisation by the lactonohydrolases oryH or oryL could give oryzine B directly. Finally, enoyl reduction by the dehydrogenase oryD would then convert oryzine B into oryzine A. The polypeptide is Lactonohydrolase oryH (Aspergillus oryzae (strain ATCC 42149 / RIB 40) (Yellow koji mold)).